The following is a 481-amino-acid chain: Glycogen synthase (481 aa).

Residue Lys15 coordinates ADP-alpha-D-glucose.

This sequence belongs to the glycosyltransferase 1 family. Bacterial/plant glycogen synthase subfamily.

The enzyme catalyses [(1-&gt;4)-alpha-D-glucosyl](n) + ADP-alpha-D-glucose = [(1-&gt;4)-alpha-D-glucosyl](n+1) + ADP + H(+). It participates in glycan biosynthesis; glycogen biosynthesis. In terms of biological role, synthesizes alpha-1,4-glucan chains using ADP-glucose. The protein is Glycogen synthase of Mesorhizobium japonicum (strain LMG 29417 / CECT 9101 / MAFF 303099) (Mesorhizobium loti (strain MAFF 303099)).